The sequence spans 321 residues: Transcriptional activator protein Pur-alpha (321 aa).

The interval 1 to 54 (MADRDSGSEQGGAALGSGGSLGHPGSGSGSGGGGGGGGGGGGSGGGGGAPGGLQ) is disordered. Ala2 bears the N-acetylalanine mark. Gly residues predominate over residues 9 to 51 (EQGGAALGSGGSLGHPGSGSGSGGGGGGGGGGGGSGGGGGAPG). The residue at position 181 (Ser181) is a Phosphoserine. The span at 294 to 313 (LHQQQQQQQEETTAATLLLQ) shows a compositional bias: low complexity. Residues 294–321 (LHQQQQQQQEETTAATLLLQGEEEGEED) form a disordered region.

The protein belongs to the PUR DNA-binding protein family. In terms of assembly, homodimer, heterodimer with PURB and heterotrimer with PURB and YBX1/Y-box protein 1. Interacts with FMR1; this interaction occurs in association with polyribosome.

The protein resides in the nucleus. This is a probable transcription activator that specifically binds the purine-rich single strand of the PUR element located upstream of the c-Myc gene. May play a role in the initiation of DNA replication and in recombination. This is Transcriptional activator protein Pur-alpha (Pura) from Mus musculus (Mouse).